Here is an 879-residue protein sequence, read N- to C-terminus: Alanine--tRNA ligase (879 aa).

Residues His567, His571, Cys669, and His673 each contribute to the Zn(2+) site.

The protein belongs to the class-II aminoacyl-tRNA synthetase family. Requires Zn(2+) as cofactor.

The protein localises to the cytoplasm. The catalysed reaction is tRNA(Ala) + L-alanine + ATP = L-alanyl-tRNA(Ala) + AMP + diphosphate. Functionally, catalyzes the attachment of alanine to tRNA(Ala) in a two-step reaction: alanine is first activated by ATP to form Ala-AMP and then transferred to the acceptor end of tRNA(Ala). Also edits incorrectly charged Ser-tRNA(Ala) and Gly-tRNA(Ala) via its editing domain. The protein is Alanine--tRNA ligase of Lactobacillus acidophilus (strain ATCC 700396 / NCK56 / N2 / NCFM).